Consider the following 278-residue polypeptide: Inosose isomerase (278 aa).

A divalent metal cation contacts are provided by E142, D174, H200, and E246.

Belongs to the IolI family. Mn(2+) serves as cofactor. Requires Fe(2+) as cofactor. Co(2+) is required as a cofactor.

The enzyme catalyses scyllo-inosose = scyllo-inosine. It functions in the pathway polyol metabolism; myo-inositol degradation into acetyl-CoA. In terms of biological role, involved in the reversible interconverion of 2-keto-myo-inositol (2KMI, inosose or 2,4,6/3,5-pentahydroxycyclohexanone) to 1-keto-D-chiro-inositol (1KDCI or 2,3,5/4,6-pentahydroxycyclohexanone). The protein is Inosose isomerase (iolI) of Bacillus subtilis (strain 168).